Consider the following 140-residue polypeptide: PDZ domain-containing protein 11 (140 aa).

One can recognise a PDZ domain in the interval 47-129; the sequence is TITLKKPPGA…ISMRVRFFPY (83 aa).

In terms of assembly, interacts with ATP2B1, ATP2B2, ATP2B3, ATP2B4 and ATP7A. Interacts with PLEKHA7 (via WW domains) at zonula adherens; this interaction is essential for the interaction between PLEKHA7 and the ADAM10-binding protein TSPAN33. Interacts with SLC5A6. In terms of tissue distribution, widely expressed (at protein level).

The protein resides in the secreted. It is found in the cytoplasm. The protein localises to the cell junction. It localises to the adherens junction. Its subcellular location is the cell membrane. Functionally, mediates docking of ADAM10 to zonula adherens by interacting with PLEKHA7 which is required for PLEKHA7 to interact with the ADAM10-binding protein TSPAN33. The polypeptide is PDZ domain-containing protein 11 (PDZD11) (Homo sapiens (Human)).